The following is a 290-amino-acid chain: Small ribosomal subunit biogenesis GTPase RsgA (290 aa).

The CP-type G domain maps to 62 to 213; that stretch reads KNSLVRPPIV…IADTPGFSSL (152 aa). GTP-binding positions include 111–114 and 156–164; these read SKMD and GQTGVGKST. Residues Cys237, Cys242, His244, and Cys250 each contribute to the Zn(2+) site.

The protein belongs to the TRAFAC class YlqF/YawG GTPase family. RsgA subfamily. Monomer. Associates with 30S ribosomal subunit, binds 16S rRNA. Requires Zn(2+) as cofactor.

The protein resides in the cytoplasm. In terms of biological role, one of several proteins that assist in the late maturation steps of the functional core of the 30S ribosomal subunit. Helps release RbfA from mature subunits. May play a role in the assembly of ribosomal proteins into the subunit. Circularly permuted GTPase that catalyzes slow GTP hydrolysis, GTPase activity is stimulated by the 30S ribosomal subunit. In Streptococcus pyogenes serotype M6 (strain ATCC BAA-946 / MGAS10394), this protein is Small ribosomal subunit biogenesis GTPase RsgA.